A 379-amino-acid polypeptide reads, in one-letter code: Pathogen-associated molecular patterns-induced protein A70 (379 aa).

A helical transmembrane segment spans residues 7-29; sequence VASFFTPTTLFLLLNLMIGTIVV. Residue Asn122 is glycosylated (N-linked (GlcNAc...) asparagine). The disordered stretch occupies residues 133-154; the sequence is TGSDPHSHSHSHLDLHPDPAPA. The span at 137–149 shows a compositional bias: basic and acidic residues; sequence PHSHSHSHLDLHP. An N-linked (GlcNAc...) asparagine glycan is attached at Asn170. 2 disordered regions span residues 216-238 and 256-347; these read PEED…LTRA and SDPD…DGVD. Positions 221 to 231 are enriched in polar residues; sequence PTGTGVNSQIN. Basic and acidic residues-rich tracts occupy residues 256-285 and 322-335; these read SDPD…ESKK and SLER…RVER.

It is found in the membrane. The sequence is that of Pathogen-associated molecular patterns-induced protein A70 from Arabidopsis thaliana (Mouse-ear cress).